The sequence spans 240 residues: Probable transcriptional regulatory protein YrbC (240 aa).

This sequence belongs to the TACO1 family.

The protein resides in the cytoplasm. This chain is Probable transcriptional regulatory protein YrbC (yrbC), found in Bacillus subtilis (strain 168).